The sequence spans 910 residues: Leucine--tRNA ligase (910 aa).

The short motif at 42 to 52 (PYPSGKLHMGH) is the 'HIGH' region element. The short motif at 658–662 (TMSKS) is the 'KMSKS' region element. K661 is a binding site for ATP.

The protein belongs to the class-I aminoacyl-tRNA synthetase family.

The protein resides in the cytoplasm. The enzyme catalyses tRNA(Leu) + L-leucine + ATP = L-leucyl-tRNA(Leu) + AMP + diphosphate. The sequence is that of Leucine--tRNA ligase from Acidovorax ebreus (strain TPSY) (Diaphorobacter sp. (strain TPSY)).